We begin with the raw amino-acid sequence, 709 residues long: DCC-interacting protein 13-alpha (709 aa).

A required for RAB5A binding region spans residues 1–428 (MPGIDKLPIE…RPPTARTSSS (428 aa)). One can recognise a BAR domain in the interval 3–268 (GIDKLPIEET…DPLYVPDPDP (266 aa)). The stretch at 215 to 259 (SENLNEQLEEFLANIGTSVQNVRREMDSDIETMQQTIEDLEVASD) forms a coiled coil. The PH domain occupies 277 to 375 (LTRKAGYLNA…WICTINNISK (99 aa)). Disordered stretches follow at residues 397–434 (AVTP…LGSE), 467–491 (GQAK…STKS), and 645–709 (VKEK…ESEA). Phosphothreonine is present on Thr399. Residue Ser401 is modified to Phosphoserine. Positions 403-414 (SFQQRHESLRPA) match the F&amp;H motif. At Ser410 the chain carries Phosphoserine; by PKA. The PID domain maps to 496-656 (SILHQLFIVR…EKQQKELNKQ (161 aa)). The stretch at 621–673 (LAKQIALHAELDRRASEKQKEIERVKEKQQKELNKQKQIEKDLEEQSRLIAAS) forms a coiled coil. The span at 645-667 (VKEKQQKELNKQKQIEKDLEEQS) shows a compositional bias: basic and acidic residues. Residues 674 to 693 (SRPNQASSEGQFVVLSSSQS) show a composition bias toward polar residues. Residues Ser693 and Ser696 each carry the phosphoserine modification. The segment covering 700–709 (EGGKKRESEA) has biased composition (basic and acidic residues).

As to quaternary structure, homodimer. Binds RAB5A/Rab5 through an N-terminal domain. This interaction is essential for its recruitment to endosomal membranes as well as its role in cell proliferation. Binds DCC and the catalytic domain of the inactive form of AKT2 through its PID domain. Binds PIK3CA and subunits of the NuRD/MeCP1 complex. Interacts with OCRL and INPP5B. Interacts with NTRK2. Interacts with APPL2; interaction is independent of follicle stimulating hormone stimulation; interaction is decreased by adiponectin in a time-dependent manner. Forms a complex with APPL2 and RUVBL2. Forms a complex comprising APPL2, RUVBL2, CTNNB1, HDAC1 and HDAC2; interaction reduces interaction between CTNNB1, HDAC1, HDAC2 and RUVBL2 leading to the decrease of deacetylase activity of this complex; affects the recruitment of repressive complexes to the Wnt target genes. Interacts with ANXA2. Interacts with TGFBR1; interaction is TGF beta dependent; mediates trafficking of the TGFBR1 from the endosomes to the nucleus via microtubules in a TRAF6-dependent manner. Interacts with PRKCZ. Interacts with PIK3R1 and APPL2. Interacts with ADIPOR1; ADIPOQ enhances this interaction; inhibites adiponectin-stimulated binding of APPL2 to ADIPOR1. In terms of processing, phosphorylation at Ser-410 by PKA severely impairs binding to OCRL. High levels in heart, ovary, pancreas and skeletal muscle.

It localises to the early endosome membrane. The protein localises to the nucleus. Its subcellular location is the cytoplasm. The protein resides in the endosome. It is found in the cell projection. It localises to the ruffle. The protein localises to the cytoplasmic vesicle. Its subcellular location is the phagosome. In terms of biological role, multifunctional adapter protein that binds to various membrane receptors, nuclear factors and signaling proteins to regulate many processes, such as cell proliferation, immune response, endosomal trafficking and cell metabolism. Regulates signaling pathway leading to cell proliferation through interaction with RAB5A and subunits of the NuRD/MeCP1 complex. Functions as a positive regulator of innate immune response via activation of AKT1 signaling pathway by forming a complex with APPL1 and PIK3R1. Inhibits Fc-gamma receptor-mediated phagocytosis through PI3K/Akt signaling in macrophages. Regulates TLR4 signaling in activated macrophages. Involved in trafficking of the TGFBR1 from the endosomes to the nucleus via microtubules in a TRAF6-dependent manner. Plays a role in cell metabolism by regulating adiponecting and insulin signaling pathways. Required for fibroblast migration through HGF cell signaling. Positive regulator of beta-catenin/TCF-dependent transcription through direct interaction with RUVBL2/reptin resulting in the relief of RUVBL2-mediated repression of beta-catenin/TCF target genes by modulating the interactions within the beta-catenin-reptin-HDAC complex. The protein is DCC-interacting protein 13-alpha of Homo sapiens (Human).